Here is a 389-residue protein sequence, read N- to C-terminus: Lipid-A-disaccharide synthase (389 aa).

This sequence belongs to the LpxB family.

The enzyme catalyses a lipid X + a UDP-2-N,3-O-bis[(3R)-3-hydroxyacyl]-alpha-D-glucosamine = a lipid A disaccharide + UDP + H(+). It functions in the pathway bacterial outer membrane biogenesis; LPS lipid A biosynthesis. Condensation of UDP-2,3-diacylglucosamine and 2,3-diacylglucosamine-1-phosphate to form lipid A disaccharide, a precursor of lipid A, a phosphorylated glycolipid that anchors the lipopolysaccharide to the outer membrane of the cell. The chain is Lipid-A-disaccharide synthase from Burkholderia orbicola (strain MC0-3).